Reading from the N-terminus, the 433-residue chain is Glutamate-1-semialdehyde 2,1-aminomutase (433 aa).

Lysine 273 is modified (N6-(pyridoxal phosphate)lysine).

The protein belongs to the class-III pyridoxal-phosphate-dependent aminotransferase family. HemL subfamily. Homodimer. The cofactor is pyridoxal 5'-phosphate.

It is found in the cytoplasm. The enzyme catalyses (S)-4-amino-5-oxopentanoate = 5-aminolevulinate. It participates in porphyrin-containing compound metabolism; protoporphyrin-IX biosynthesis; 5-aminolevulinate from L-glutamyl-tRNA(Glu): step 2/2. In Polynucleobacter necessarius subsp. necessarius (strain STIR1), this protein is Glutamate-1-semialdehyde 2,1-aminomutase.